A 407-amino-acid polypeptide reads, in one-letter code: Prolyl hydroxylase EGLN2 (407 aa).

Composition is skewed to low complexity over residues 1 to 24 (MDSP…SSEP) and 57 to 75 (ASAG…TASP). Disordered stretches follow at residues 1-34 (MDSP…RARM), 50-89 (CPGV…GELR), and 108-157 (AAQG…CSSG). The Bipartite nuclear localization signal motif lies at 89-134 (RPLQSEGAAALVTKGCQRLAAQGARPEAPKRKWAEDGGDAPSPSKR). A Phosphoserine modification is found at S130. Positions 225-235 (VSQRAIPPRSI) are beta(2)beta(3) 'finger-like' loop. In terms of domain architecture, Fe2OG dioxygenase spans 278–376 (GRTKAMVACY…RYAITVWYFD (99 aa)). H297, D299, and H358 together coordinate Fe cation. R367 lines the 2-oxoglutarate pocket.

In terms of assembly, interacts (preferably isoform p40) with SIAH2; the interaction targets both SIAH2 isoforms for proteasomal degradation in vitro. Interacts with LIMD1, WTIP and AJUBA. The cofactor is Fe(2+). L-ascorbate serves as cofactor. Ubiquitinated by SIAH1 and/or SIAH2 in response to the unfolded protein response (UPR), leading to its degradation. Expressed in adult and fetal heart, brain, liver, lung, skeletal muscle, and kidney. Also expressed in testis and placenta. Highest levels in adult brain, placenta, lung, kidney, and testis. Expressed in hormone responsive tissues, including normal and cancerous mammary, ovarian and prostate epithelium.

Its subcellular location is the nucleus. The catalysed reaction is L-prolyl-[protein] + 2-oxoglutarate + O2 = trans-4-hydroxy-L-prolyl-[protein] + succinate + CO2. It catalyses the reaction L-prolyl-[hypoxia-inducible factor alpha subunit] + 2-oxoglutarate + O2 = trans-4-hydroxy-L-prolyl-[hypoxia-inducible factor alpha subunit] + succinate + CO2. Functionally, prolyl hydroxylase that mediates hydroxylation of proline residues in target proteins, such as ATF4, IKBKB, CEP192 and HIF1A. Target proteins are preferentially recognized via a LXXLAP motif. Cellular oxygen sensor that catalyzes, under normoxic conditions, the post-translational formation of 4-hydroxyproline in hypoxia-inducible factor (HIF) alpha proteins. Hydroxylates a specific proline found in each of the oxygen-dependent degradation (ODD) domains (N-terminal, NODD, and C-terminal, CODD) of HIF1A. Also hydroxylates HIF2A. Has a preference for the CODD site for both HIF1A and HIF2A. Hydroxylated HIFs are then targeted for proteasomal degradation via the von Hippel-Lindau ubiquitination complex. Under hypoxic conditions, the hydroxylation reaction is attenuated allowing HIFs to escape degradation resulting in their translocation to the nucleus, heterodimerization with HIF1B, and increased expression of hypoxy-inducible genes. EGLN2 is involved in regulating hypoxia tolerance and apoptosis in cardiac and skeletal muscle. Also regulates susceptibility to normoxic oxidative neuronal death. Links oxygen sensing to cell cycle and primary cilia formation by hydroxylating the critical centrosome component CEP192 which promotes its ubiquitination and subsequent proteasomal degradation. Hydroxylates IKBKB, mediating NF-kappa-B activation in hypoxic conditions. Also mediates hydroxylation of ATF4, leading to decreased protein stability of ATF4. The protein is Prolyl hydroxylase EGLN2 of Homo sapiens (Human).